The following is a 446-amino-acid chain: Probable D-serine dehydratase (446 aa).

K113 carries the post-translational modification N6-(pyridoxal phosphate)lysine.

The protein belongs to the serine/threonine dehydratase family. DsdA subfamily. Pyridoxal 5'-phosphate serves as cofactor.

It catalyses the reaction D-serine = pyruvate + NH4(+). The polypeptide is Probable D-serine dehydratase (Burkholderia lata (strain ATCC 17760 / DSM 23089 / LMG 22485 / NCIMB 9086 / R18194 / 383)).